Consider the following 249-residue polypeptide: NADH dehydrogenase [ubiquinone] flavoprotein 2, mitochondrial (249 aa).

Residues 1-32 (MFLSAALRARAAGLAAHWGKHIRNLHKTAVQN) constitute a mitochondrion transit peptide. Lys61 carries the N6-acetyllysine modification. Residues Cys135, Cys140, Cys176, and Cys180 each coordinate [2Fe-2S] cluster. A Phosphotyrosine; by SRC modification is found at Tyr193. The interval 213–249 (IPKPGPRSGRFSCEPAGGLTSLTEPPKGPGFGVQAGL) is disordered.

It belongs to the complex I 24 kDa subunit family. In terms of assembly, core subunit of respiratory chain NADH dehydrogenase (Complex I) which is composed of 45 different subunits. This is a component of the flavoprotein-sulfur (FP) fragment of the enzyme. [2Fe-2S] cluster is required as a cofactor.

It localises to the mitochondrion inner membrane. It carries out the reaction a ubiquinone + NADH + 5 H(+)(in) = a ubiquinol + NAD(+) + 4 H(+)(out). Core subunit of the mitochondrial membrane respiratory chain NADH dehydrogenase (Complex I) which catalyzes electron transfer from NADH through the respiratory chain, using ubiquinone as an electron acceptor. Parts of the peripheral arm of the enzyme, where the electrons from NADH are accepted by flavin mononucleotide (FMN) and then passed along a chain of iron-sulfur clusters by electron tunnelling to the final acceptor ubiquinone. Contains one iron-sulfur cluster. This chain is NADH dehydrogenase [ubiquinone] flavoprotein 2, mitochondrial (NDUFV2), found in Bos taurus (Bovine).